A 218-amino-acid chain; its full sequence is Non-structural protein NS3 (218 aa).

It belongs to the orbivirus NS3 family.

Functionally, may play a role in the release of virions from infected cells. This chain is Non-structural protein NS3 (Segment-10), found in Camelus dromedarius (Dromedary).